The primary structure comprises 177 residues: MPGSLKEETALLLEDYFQHRAGGAALPPSATAAELRRAAAELERRERPFFRSCAPLARAEPREAAALLRKVAAQLETDGGLNWGRLLALVVFAGTLAAALAESACEEGPSRLAAALTAYLAEEQGEWMEEHGGWDGFCRFFGRHGSQPADQNSTLSNAIMAAAGFGIAGLAFLLVVR.

The short motif at 75–94 (LETDGGLNWGRLLALVVFAG) is the BH1 element. The chain crosses the membrane as a helical span at residues 86–106 (LLALVVFAGTLAAALAESACE). The BH2 motif lies at 126–141 (EWMEEHGGWDGFCRFF). The chain crosses the membrane as a helical span at residues 156–176 (SNAIMAAAGFGIAGLAFLLVV).

This sequence belongs to the Bcl-2 family. In terms of assembly, interacts with BAX. In terms of tissue distribution, mainly expressed in neural and muscular tissues.

It is found in the cell membrane. Its function is as follows. Shows anti-apoptotic properties. Counteract the pro-apoptotic activity of BAX. The protein is Anti-apoptotic protein NR13 (NR13) of Coturnix japonica (Japanese quail).